A 206-amino-acid chain; its full sequence is Insecticyanin-B (206 aa).

An N-terminal signal peptide occupies residues 1–17; it reads MQRFLVFTIVAVATAAA. 2 disulfide bridges follow: Cys-26–Cys-136 and Cys-60–Cys-192.

This sequence belongs to the calycin superfamily. Lipocalin family. As to quaternary structure, homotetramer. As to expression, synthesized only in the caterpillars, apparently by the epidermis and secreted into the hemolymph. The protein is passed over from the larval hemolymph to that of pupae and adults and is sequestered in the eggs.

It is found in the secreted. Functionally, this protein binds a chromophore: biliverdin IX, isomer gamma. Mixed with lipoprotein-bound carotenes, this blue protein provides hornworms with their green cryptic coloration which serves a camouflage. This Manduca sexta (Tobacco hawkmoth) protein is Insecticyanin-B (INSB).